The primary structure comprises 234 residues: Large ribosomal subunit protein uL1 (234 aa).

It belongs to the universal ribosomal protein uL1 family. Part of the 50S ribosomal subunit.

Its function is as follows. Binds directly to 23S rRNA. The L1 stalk is quite mobile in the ribosome, and is involved in E site tRNA release. Functionally, protein L1 is also a translational repressor protein, it controls the translation of the L11 operon by binding to its mRNA. In Maridesulfovibrio salexigens (strain ATCC 14822 / DSM 2638 / NCIMB 8403 / VKM B-1763) (Desulfovibrio salexigens), this protein is Large ribosomal subunit protein uL1.